The following is a 331-amino-acid chain: MFARPAIRACQSLKQPVRRYTNTPPPQSGNANNSRVGILIASAVGMAGFGTYFMFGQGTTPAAGVKALGAEPKKALEMEKGFVSLQLDDVEVVNHNTKRLRFKLPEDDMVSGLHVASALLTKFKPEGAEKPVLRPYTPISDEDQKGYLDLIVKKYEGGPMSTHIHELVPGQKLDFKGPLPKYEWSANKHPHVAMIAGGTGITPMYQIMRAIFKNPADKTKVTLVVGNITEEDILLKKQLAELENTYPQRFRAFYVLDNPPKDWAGTKGYITKDLLKTVLPEPKEENIKVFVCGPPGMMKAISGNKVSPKDQGEVSGILKELGYKQDQIYKF.

The helical transmembrane segment at 36–56 (VGILIASAVGMAGFGTYFMFG) threads the bilayer. The FAD-binding FR-type domain maps to 80-185 (KGFVSLQLDD…KGPLPKYEWS (106 aa)). Position 188–223 (188–223 (KHPHVAMIAGGTGITPMYQIMRAIFKNPADKTKVTL)) interacts with FAD.

The protein belongs to the flavoprotein pyridine nucleotide cytochrome reductase family. Requires FAD as cofactor.

It localises to the mitochondrion outer membrane. It catalyses the reaction 2 Fe(III)-[cytochrome b5] + NADH = 2 Fe(II)-[cytochrome b5] + NAD(+) + H(+). May mediate the reduction of outer membrane cytochrome b5. The sequence is that of NADH-cytochrome b5 reductase 2 (MCR1) from Pyricularia oryzae (strain 70-15 / ATCC MYA-4617 / FGSC 8958) (Rice blast fungus).